A 776-amino-acid chain; its full sequence is Calcium-independent phospholipase A2-gamma (776 aa).

Asn4 and Asn157 each carry an N-linked (GlcNAc...) asparagine glycan. 2 disordered regions span residues 216–276 (KGKM…HPVS) and 306–334 (KLKS…DKKA). Basic and acidic residues-rich tracts occupy residues 221–239 (QTKE…ERKS) and 247–263 (VADR…KDKL). In terms of domain architecture, PNPLA spans 439-634 (LTIDGGGTRG…LLNNPSALAL (196 aa)). A GXGXXG motif is present at residues 443–448 (GGGTRG). Residues 469 to 489 (LFDYICGVSTGAILAFMLGLF) form a helical membrane-spanning segment. The GXSXG motif lies at 475 to 479 (GVSTG). Ser477 (nucleophile) is an active-site residue. The active-site Proton acceptor is the Asp621. Residues 621 to 623 (DGG) carry the DGA/G motif. Lys730 carries the N6-succinyllysine modification.

As to expression, expressed in myocardium (at protein level).

The protein resides in the endoplasmic reticulum membrane. The protein localises to the mitochondrion membrane. It localises to the peroxisome membrane. It carries out the reaction a 1,2-diacyl-sn-glycero-3-phosphocholine + H2O = a 1-acyl-sn-glycero-3-phosphocholine + a fatty acid + H(+). It catalyses the reaction a 1,2-diacyl-sn-glycero-3-phosphocholine + H2O = a 2-acyl-sn-glycero-3-phosphocholine + a fatty acid + H(+). The enzyme catalyses a 1,2-diacyl-sn-glycero-3-phosphoethanolamine + H2O = a 1-acyl-sn-glycero-3-phosphoethanolamine + a fatty acid + H(+). The catalysed reaction is a 1-O-(1Z-alkenyl)-2-acyl-sn-glycero-3-phosphocholine + H2O = a 1-O-(1Z-alkenyl)-sn-glycero-3-phosphocholine + a fatty acid + H(+). It carries out the reaction a 1-acyl-sn-glycero-3-phosphocholine + H2O = sn-glycerol 3-phosphocholine + a fatty acid + H(+). It catalyses the reaction 1-hexadecanoyl-2-(5Z,8Z,11Z,14Z-eicosatetraenoyl)-sn-glycero-3-phosphocholine + H2O = 2-(5Z,8Z,11Z,14Z)-eicosatetraenoyl-sn-glycero-3-phosphocholine + hexadecanoate + H(+). The enzyme catalyses 1-acyl-2-(9Z,12Z)-octadecadienoyl-sn-glycero-3-phosphocholine + H2O = a 1-acyl-sn-glycero-3-phosphocholine + (9Z,12Z)-octadecadienoate + H(+). The catalysed reaction is 1-acyl-2-(5Z,8Z,11Z,14Z-eicosatetraenoyl)-sn-glycero-3-phosphocholine + H2O = a 1-acyl-sn-glycero-3-phosphocholine + (5Z,8Z,11Z,14Z)-eicosatetraenoate + H(+). It carries out the reaction 1-hexadecanoyl-2-(5Z,8Z,11Z,14Z-eicosatetraenoyl)-sn-glycero-3-phosphocholine + H2O = 1-hexadecanoyl-sn-glycero-3-phosphocholine + (5Z,8Z,11Z,14Z)-eicosatetraenoate + H(+). It catalyses the reaction 1-octadecanoyl-2-(9Z-octadecenoyl)-sn-glycero-3-phosphocholine + H2O = 1-octadecanoyl-sn-glycero-3-phosphocholine + (9Z)-octadecenoate + H(+). The enzyme catalyses 1-hexadecanoyl-2-(9Z-octadecenoyl)-sn-glycero-3-phosphocholine + H2O = 1-hexadecanoyl-sn-glycero-3-phosphocholine + (9Z)-octadecenoate + H(+). The catalysed reaction is 1-hexadecanoyl-2-(9Z,12Z-octadecadienoyl)-sn-glycero-3-phosphocholine + H2O = (9Z,12Z)-octadecadienoate + 1-hexadecanoyl-sn-glycero-3-phosphocholine + H(+). It carries out the reaction 1-acyl-2-(9Z,12Z)-octadecadienoyl-sn-glycero-3-phosphoethanolamine + H2O = a 1-acyl-sn-glycero-3-phosphoethanolamine + (9Z,12Z)-octadecadienoate + H(+). It catalyses the reaction 1-acyl-2-(5Z,8Z,11Z,14Z)-eicosatetraenoyl-sn-glycero-3-phosphoethanolamine + H2O = a 1-acyl-sn-glycero-3-phosphoethanolamine + (5Z,8Z,11Z,14Z)-eicosatetraenoate + H(+). The enzyme catalyses 1-hexadecanoyl-2-(5Z,8Z,11Z,14Z-eicosatetraenoyl)-sn-glycero-3-phosphoethanolamine + H2O = 1-hexadecanoyl-sn-glycero-3-phosphoethanolamine + (5Z,8Z,11Z,14Z)-eicosatetraenoate + H(+). The catalysed reaction is 1-octadecanoyl-2-(9Z-octadecenoyl)-sn-glycero-3-phosphocholine + H2O = 2-(9Z-octadecenoyl)-sn-glycero-3-phosphocholine + octadecanoate + H(+). It carries out the reaction 1-hexadecanoyl-2-(4Z,7Z,10Z,13Z,16Z,19Z-docosahexaenoyl)-sn-glycero-3-phosphocholine + H2O = 2-(4Z,7Z,10Z,13Z,16Z,19Z-docosahexaenoyl)-sn-glycero-3-phosphocholine + hexadecanoate + H(+). It catalyses the reaction 1-O-(1Z)-hexadecenyl-2 (5Z,8Z,11Z,14Z)-eicosatetraenoyl-sn-glycero-3-phosphocholine + H2O = 1-(1Z-hexadecenyl)-sn-glycero-3-phosphocholine + (5Z,8Z,11Z,14Z)-eicosatetraenoate + H(+). The enzyme catalyses 1-O-(1Z-hexadecenyl)-2-(9Z-octadecenoyl)-sn-glycero-3-phosphocholine + H2O = 1-(1Z-hexadecenyl)-sn-glycero-3-phosphocholine + (9Z)-octadecenoate + H(+). The catalysed reaction is 1-hexadecanoyl-sn-glycero-3-phosphocholine + H2O = sn-glycerol 3-phosphocholine + hexadecanoate + H(+). It carries out the reaction 1',3'-bis-[1,2-di-(9Z,12Z-octadecadienoyl)-sn-glycero-3-phospho]-glycerol + H2O = 1'-[1,2-di-(9Z,12Z-octadecadienoyl)-sn-glycero-3-phospho]-3'-[1-(9Z,12Z-octadecadienoyl)-sn-glycero-3-phospho]-glycerol + (9Z,12Z)-octadecadienoate + H(+). It catalyses the reaction 1'-[1-acyl-2-(9-hydroxy-(10E,12Z)-octadecadienoyl)-sn-glycero-3-phospho]-3'-[1,2-diacyl-sn-glycero-3-phospho]-glycerol + H2O = 9-hydroxy-(10E,12Z)-octadecadienoate + 1'-[1,2-diacyl-sn-glycero-3-phospho],3'-[1-acyl-sn-glycero-3-phospho]-glycerol + H(+). It functions in the pathway phospholipid metabolism. Calcium-independent phospholipase. Calcium-independent and membrane-bound phospholipase, that catalyzes the esterolytic cleavage of fatty acids from glycerophospholipids to yield free fatty acids and lysophospholipids, hence regulating membrane physical properties and the release of lipid second messengers and growth factors. Hydrolyzes phosphatidylethanolamine, phosphatidylcholine and probably phosphatidylinositol with a possible preference for the former. Also has a broad substrate specificity in terms of fatty acid moieties, hydrolyzing saturated and mono-unsaturated fatty acids at nearly equal rates from either the sn-1 or sn-2 position in diacyl phosphatidylcholine. However, has a weak activity toward polyunsaturated fatty acids at the sn-2 position, and thereby favors the production of 2-arachidonoyl lysophosphatidylcholine, a key branch point metabolite in eicosanoid signaling. On the other hand, can produce arachidonic acid from the sn-1 position of diacyl phospholipid and from the sn-2 position of arachidonate-containing plasmalogen substrates. Therefore, plays an important role in the mobilization of arachidonic acid in response to cellular stimuli and the generation of lipid second messengers. Can also hydrolyze lysophosphatidylcholine. In the mitochondrial compartment, catalyzes the hydrolysis and release of oxidized aliphatic chains from cardiolipin and integrates mitochondrial bioenergetics and signaling. It is essential for maintaining efficient bioenergetic mitochondrial function through tailoring mitochondrial membrane lipid metabolism and composition. The chain is Calcium-independent phospholipase A2-gamma from Mus musculus (Mouse).